Consider the following 360-residue polypeptide: Peptide chain release factor 1 (360 aa).

N5-methylglutamine is present on glutamine 235. Positions lysine 285 to arginine 308 are enriched in basic and acidic residues. The segment at lysine 285–proline 313 is disordered.

The protein belongs to the prokaryotic/mitochondrial release factor family. Methylated by PrmC. Methylation increases the termination efficiency of RF1.

Its subcellular location is the cytoplasm. Peptide chain release factor 1 directs the termination of translation in response to the peptide chain termination codons UAG and UAA. The polypeptide is Peptide chain release factor 1 (Photorhabdus laumondii subsp. laumondii (strain DSM 15139 / CIP 105565 / TT01) (Photorhabdus luminescens subsp. laumondii)).